Consider the following 158-residue polypeptide: 2-C-methyl-D-erythritol 2,4-cyclodiphosphate synthase (158 aa).

A divalent metal cation contacts are provided by Asp10 and His12. Residues 10-12 (DVH) and 36-37 (HS) contribute to the 4-CDP-2-C-methyl-D-erythritol 2-phosphate site. His44 contacts a divalent metal cation. 4-CDP-2-C-methyl-D-erythritol 2-phosphate-binding positions include 58–60 (DIG), 63–67 (FSDTD), and Arg144.

The protein belongs to the IspF family. In terms of assembly, homotrimer. Requires a divalent metal cation as cofactor.

It carries out the reaction 4-CDP-2-C-methyl-D-erythritol 2-phosphate = 2-C-methyl-D-erythritol 2,4-cyclic diphosphate + CMP. It functions in the pathway isoprenoid biosynthesis; isopentenyl diphosphate biosynthesis via DXP pathway; isopentenyl diphosphate from 1-deoxy-D-xylulose 5-phosphate: step 4/6. In terms of biological role, involved in the biosynthesis of isopentenyl diphosphate (IPP) and dimethylallyl diphosphate (DMAPP), two major building blocks of isoprenoid compounds. Catalyzes the conversion of 4-diphosphocytidyl-2-C-methyl-D-erythritol 2-phosphate (CDP-ME2P) to 2-C-methyl-D-erythritol 2,4-cyclodiphosphate (ME-CPP) with a corresponding release of cytidine 5-monophosphate (CMP). This is 2-C-methyl-D-erythritol 2,4-cyclodiphosphate synthase from Burkholderia vietnamiensis (strain G4 / LMG 22486) (Burkholderia cepacia (strain R1808)).